Reading from the N-terminus, the 1112-residue chain is cGMP-inhibited 3',5'-cyclic phosphodiesterase 3B (1112 aa).

Over residues 1-10 (MRRDERDAKA) the composition is skewed to basic and acidic residues. Positions 1-25 (MRRDERDAKAMRSLQPPDGAGSPPE) are interaction with RAPGEF3. The interval 1–26 (MRRDERDAKAMRSLQPPDGAGSPPES) is disordered. Residue serine 13 is modified to Phosphoserine. Transmembrane regions (helical) follow at residues 88–108 (FVLA…AAWL), 117–137 (HSLS…CFLT), 152–172 (WWLL…WQWW), 192–212 (AAAG…TLAH), 220–240 (VLVL…LGSL), and 247–267 (LLSG…DHFF). Residue serine 295 is modified to Phosphoserine; by PKB/AKT1 or PKB/AKT2. Residues serine 296 and serine 442 each carry the phosphoserine modification. The tract at residues 418-471 (EKGDRKLNKGLNRNSLPTPQLRRSSGTSGLLPVEQSSRWDRNNGKRPHQEFGIS) is disordered. Over residues 428-445 (LNRNSLPTPQLRRSSGTS) the composition is skewed to polar residues. The interval 436–460 (PQLRRSSGTSGLLPVEQSSRWDRNN) is interaction with PIK3R6. The segment covering 454–466 (SRWDRNNGKRPHQ) has biased composition (basic and acidic residues). The region spanning 651-1079 (TNIEQEVSLD…KIWKEIVEEE (429 aa)) is the PDEase domain. The active-site Proton donor is histidine 737. Histidine 737 lines the AMP pocket. Mg(2+)-binding residues include histidine 741, histidine 821, aspartate 822, and aspartate 937. Residues aspartate 822, aspartate 937, and glutamine 988 each contribute to the AMP site. 2 stretches are compositionally biased toward acidic residues: residues 1017–1041 (EEDN…EEME) and 1103–1112 (QVIEEADEEE). 2 disordered regions span residues 1017 to 1051 (EEDN…PPRR) and 1092 to 1112 (ENSS…DEEE).

It belongs to the cyclic nucleotide phosphodiesterase family. PDE3 subfamily. Homodimer. Interacts with PIK3CG; regulates PDE3B activity and thereby cAMP levels in cells. Interacts with RAPGEF3 and PIK3R6; form a signaling complex that regulates phosphatidylinositol 3-kinase gamma in angiogenesis. Interacts with ABHD15; this interaction regulates PDE3B's stability and expression and, thereby, impacts the antilipolytic action of insulin. Mg(2+) serves as cofactor. Requires Mn(2+) as cofactor. In terms of processing, phosphorylation at Ser-295 mediates insulin-induced activation of PDE3B. Abundant in adipose tissues.

The protein resides in the membrane. The enzyme catalyses a nucleoside 3',5'-cyclic phosphate + H2O = a nucleoside 5'-phosphate + H(+). The catalysed reaction is 3',5'-cyclic AMP + H2O = AMP + H(+). It catalyses the reaction 3',5'-cyclic GMP + H2O = GMP + H(+). With respect to regulation, inhibited by cGMP. In terms of biological role, cyclic nucleotide phosphodiesterase with a dual-specificity for the second messengers cAMP and cGMP, which are key regulators of many important physiological process. Regulates angiogenesis by inhibiting the cAMP-dependent guanine nucleotide exchange factor RAPGEF3 and downstream phosphatidylinositol 3-kinase gamma-mediated signaling. Controls cardiac contractility by reducing cAMP concentration in cardiocytes. This chain is cGMP-inhibited 3',5'-cyclic phosphodiesterase 3B, found in Homo sapiens (Human).